The sequence spans 332 residues: Ketol-acid reductoisomerase (NADP(+)) (332 aa).

The region spanning 1-182 is the KARI N-terminal Rossmann domain; the sequence is MAVIYYDKDC…GSNRAGVLET (182 aa). NADP(+)-binding positions include 25-28 and 83-86; these read YGAQ and DTSQ. Histidine 108 is a catalytic residue. An NADP(+)-binding site is contributed by glycine 134. A KARI C-terminal knotted domain is found at 183-328; that stretch reads TFAEETETDL…AELRSMMSWL (146 aa). Aspartate 191, glutamate 195, glutamate 227, and glutamate 231 together coordinate Mg(2+). Serine 252 is a substrate binding site.

Belongs to the ketol-acid reductoisomerase family. It depends on Mg(2+) as a cofactor.

It carries out the reaction (2R)-2,3-dihydroxy-3-methylbutanoate + NADP(+) = (2S)-2-acetolactate + NADPH + H(+). It catalyses the reaction (2R,3R)-2,3-dihydroxy-3-methylpentanoate + NADP(+) = (S)-2-ethyl-2-hydroxy-3-oxobutanoate + NADPH + H(+). It functions in the pathway amino-acid biosynthesis; L-isoleucine biosynthesis; L-isoleucine from 2-oxobutanoate: step 2/4. Its pathway is amino-acid biosynthesis; L-valine biosynthesis; L-valine from pyruvate: step 2/4. Functionally, involved in the biosynthesis of branched-chain amino acids (BCAA). Catalyzes an alkyl-migration followed by a ketol-acid reduction of (S)-2-acetolactate (S2AL) to yield (R)-2,3-dihydroxy-isovalerate. In the isomerase reaction, S2AL is rearranged via a Mg-dependent methyl migration to produce 3-hydroxy-3-methyl-2-ketobutyrate (HMKB). In the reductase reaction, this 2-ketoacid undergoes a metal-dependent reduction by NADPH to yield (R)-2,3-dihydroxy-isovalerate. In Dehalococcoides mccartyi (strain ATCC BAA-2266 / KCTC 15142 / 195) (Dehalococcoides ethenogenes (strain 195)), this protein is Ketol-acid reductoisomerase (NADP(+)).